A 698-amino-acid polypeptide reads, in one-letter code: MOXD1 homolog 1 (698 aa).

The first 20 residues, 1 to 20 (MSVQDVLWIVLTVQLSFGLA), serve as a signal peptide directing secretion. N-linked (GlcNAc...) asparagine glycosylation is found at Asn-36, Asn-140, and Asn-221. The region spanning 54–174 (GLYWLKWWIN…DTFKVLWSIG (121 aa)) is the DOMON domain. Residue Tyr-232 is part of the active site. His-265 and His-266 together coordinate Cu cation. Cys-272 and Cys-309 are oxidised to a cystine. His-347, His-425, and His-427 together coordinate Cu cation. 2 disulfide bridges follow: Cys-403-Cys-516 and Cys-479-Cys-501. Residue His-425 is part of the active site. An N-linked (GlcNAc...) asparagine glycan is attached at Asn-465. Cu cation is bound at residue Met-500. 2 N-linked (GlcNAc...) asparagine glycosylation sites follow: Asn-538 and Asn-561.

The protein belongs to the copper type II ascorbate-dependent monooxygenase family. It depends on Cu(2+) as a cofactor.

It is found in the secreted. The polypeptide is MOXD1 homolog 1 (Drosophila melanogaster (Fruit fly)).